Here is a 327-residue protein sequence, read N- to C-terminus: Glycerol-3-phosphate dehydrogenase [NAD(P)+] (327 aa).

The NADPH site is built by Trp11, Arg30, and Lys103. 3 residues coordinate sn-glycerol 3-phosphate: Lys103, Gly131, and Ser133. Ala135 contributes to the NADPH binding site. Positions 186, 243, 253, 254, and 255 each coordinate sn-glycerol 3-phosphate. Lys186 functions as the Proton acceptor in the catalytic mechanism. Arg254 is a binding site for NADPH. Residues Val281 and Glu283 each coordinate NADPH.

The protein belongs to the NAD-dependent glycerol-3-phosphate dehydrogenase family.

It is found in the cytoplasm. The enzyme catalyses sn-glycerol 3-phosphate + NAD(+) = dihydroxyacetone phosphate + NADH + H(+). It catalyses the reaction sn-glycerol 3-phosphate + NADP(+) = dihydroxyacetone phosphate + NADPH + H(+). Its pathway is membrane lipid metabolism; glycerophospholipid metabolism. Catalyzes the reduction of the glycolytic intermediate dihydroxyacetone phosphate (DHAP) to sn-glycerol 3-phosphate (G3P), the key precursor for phospholipid synthesis. This is Glycerol-3-phosphate dehydrogenase [NAD(P)+] from Wolbachia sp. subsp. Drosophila simulans (strain wRi).